Here is a 1472-residue protein sequence, read N- to C-terminus: Gag-Pol polyprotein (1472 aa).

A lipid anchor (N-myristoyl glycine; by host) is attached at Gly2. Positions 16–22 (FEKIRLR) match the Nuclear export signal motif. Positions 26–32 (KKKYQIK) match the Nuclear localization signal motif. 2 disordered regions span residues 115–135 (EKAAKKKNETTAPPGGESRNY) and 215–234 (DRTHRPPAGPLPAGQLRDPT). Phosphotyrosine; by host is present on Tyr135. 2 consecutive CCHC-type zinc fingers follow at residues 390–407 (LKCFNCGKFGHMQRECKA) and 411–428 (IKCFKCGKIGHMAKDCKN). The segment at 454 to 500 (HSWSGTNSPPNGNSLRSSKEAPPAVCREGTAPERGERTDKETEGERS) is disordered. Residues 456-469 (WSGTNSPPNGNSLR) are compositionally biased toward polar residues. A compositionally biased stretch (basic and acidic residues) spans 483–499 (TAPERGERTDKETEGER). Residues 524-597 (VQALLDTGAD…TPINIIGRNI (74 aa)) form the Peptidase A2 domain. Catalysis depends on Asp529, which acts as the For protease activity; shared with dimeric partner. Positions 653–843 (EGKLSRIGGE…PPWEWMGYKL (191 aa)) constitute a Reverse transcriptase domain. Asp719, Asp794, and Asp795 together coordinate Mg(2+). The tract at residues 836 to 844 (WEWMGYKLH) is RT 'primer grip'. Residues 1007 to 1023 (WDMWWQDYWQVSWIPEW) carry the Tryptophan repeat motif motif. In terms of domain architecture, RNase H type-1 spans 1043 to 1166 (IKGEDVYYVD…IDKLVSKGIR (124 aa)). Residues Asp1052, Glu1087, Asp1107, and Asp1158 each contribute to the Mg(2+) site. Residues 1172 to 1213 (DRIEEAQDDHAKYHNNWRSMVQEFGLPNIVAKEIVAACPKCQ) form an Integrase-type zinc finger. Residues His1181, His1185, Cys1209, and Cys1212 each contribute to the Zn(2+) site. Positions 1223–1373 (VDASIETWQM…SSAERLVNML (151 aa)) constitute an Integrase catalytic domain. 2 residues coordinate Mg(2+): Asp1233 and Asp1285. Residues 1392 to 1439 (FKVYYREGRDPVWKGPARLIWKGEGAVVIKEGEDIKVVPRRKAKIIKD) constitute a DNA-binding region (integrase-type). A disordered region spans residues 1440-1472 (YGERKTMDSEGSMEGVREANKQMEGDSDLQDQE). Over residues 1454-1463 (GVREANKQME) the composition is skewed to basic and acidic residues.

Homotrimer. Interacts with gp41 (via C-terminus). As to quaternary structure, homodimer. The active site consists of two apposed aspartic acid residues. In terms of assembly, heterodimer of p66 RT and p51 RT (RT p66/p51). Heterodimerization of RT is essential for DNA polymerase activity. Despite the sequence identities, p66 RT and p51 RT have distinct folding. Homotetramer; may further associate as a homohexadecamer. Mg(2+) is required as a cofactor. Specific enzymatic cleavages by the viral protease yield mature proteins. The protease is released by autocatalytic cleavage. The polyprotein is cleaved during and after budding, this process is termed maturation. Proteolytic cleavage of p66 RT removes the RNase H domain to yield the p51 RT subunit. Post-translationally, capsid protein p24 is phosphorylated.

The protein localises to the virion. It localises to the host nucleus. Its subcellular location is the host cytoplasm. The protein resides in the host cell membrane. The catalysed reaction is Specific for a P1 residue that is hydrophobic, and P1' variable, but often Pro.. The enzyme catalyses Endohydrolysis of RNA in RNA/DNA hybrids. Three different cleavage modes: 1. sequence-specific internal cleavage of RNA. Human immunodeficiency virus type 1 and Moloney murine leukemia virus enzymes prefer to cleave the RNA strand one nucleotide away from the RNA-DNA junction. 2. RNA 5'-end directed cleavage 13-19 nucleotides from the RNA end. 3. DNA 3'-end directed cleavage 15-20 nucleotides away from the primer terminus.. It catalyses the reaction 3'-end directed exonucleolytic cleavage of viral RNA-DNA hybrid.. It carries out the reaction DNA(n) + a 2'-deoxyribonucleoside 5'-triphosphate = DNA(n+1) + diphosphate. With respect to regulation, the viral protease is inhibited by many synthetic protease inhibitors (PIs), such as amprenavir, atazanavir, indinavir, loprinavir, nelfinavir, ritonavir and saquinavir. RT can be inhibited either by nucleoside RT inhibitors (NRTIs) or by non nucleoside RT inhibitors (NNRTIs). NRTIs act as chain terminators, whereas NNRTIs inhibit DNA polymerization by binding a small hydrophobic pocket near the RT active site and inducing an allosteric change in this region. Classical NRTIs are abacavir, adefovir (PMEA), didanosine (ddI), lamivudine (3TC), stavudine (d4T), tenofovir (PMPA), zalcitabine (ddC), and zidovudine (AZT). Classical NNRTIs are atevirdine (BHAP U-87201E), delavirdine, efavirenz (DMP-266), emivirine (I-EBU), and nevirapine (BI-RG-587). The tritherapies used as a basic effective treatment of AIDS associate two NRTIs and one NNRTI. Use of protease inhibitors in tritherapy regimens permit more ambitious therapeutic strategies. Gag-Pol polyprotein and Gag polyprotein may regulate their own translation, by the binding genomic RNA in the 5'-UTR. At low concentration, Gag-Pol and Gag would promote translation, whereas at high concentration, the polyproteins encapsidate genomic RNA and then shut off translation. Its function is as follows. Matrix protein p17 has two main functions: in infected cell, it targets Gag and Gag-pol polyproteins to the plasma membrane via a multipartite membrane-binding signal, that includes its myristointegration complex. The myristoylation signal and the NLS exert conflicting influences its subcellular localization. The key regulation of these motifs might be phosphorylation of a portion of MA molecules on the C-terminal tyrosine at the time of virus maturation, by virion-associated cellular tyrosine kinase. Implicated in the release from host cell mediated by Vpu. Functionally, capsid protein p24 forms the conical core that encapsulates the genomic RNA-nucleocapsid complex in the virion. The core is constituted by capsid protein hexamer subunits. The core is disassembled soon after virion entry. Interaction with host PPIA/CYPA protects the virus from restriction by host TRIM5-alpha and from an unknown antiviral activity in host cells. This capsid restriction by TRIM5 is one of the factors which restricts SIV to the simian species. In terms of biological role, nucleocapsid protein p7 encapsulates and protects viral dimeric unspliced (genomic) RNA. Binds these RNAs through its zinc fingers. Facilitates rearangement of nucleic acid secondary structure during retrotranscription of genomic RNA. This capability is referred to as nucleic acid chaperone activity. The aspartyl protease mediates proteolytic cleavages of Gag and Gag-Pol polyproteins during or shortly after the release of the virion from the plasma membrane. Cleavages take place as an ordered, step-wise cascade to yield mature proteins. This process is called maturation. Displays maximal activity during the budding process just prior to particle release from the cell. Also cleaves Nef and Vif, probably concomitantly with viral structural proteins on maturation of virus particles. Hydrolyzes host EIF4GI and PABP1 in order to shut off the capped cellular mRNA translation. The resulting inhibition of cellular protein synthesis serves to ensure maximal viral gene expression and to evade host immune response. Its function is as follows. Reverse transcriptase/ribonuclease H (RT) is a multifunctional enzyme that converts the viral dimeric RNA genome into dsDNA in the cytoplasm, shortly after virus entry into the cell. This enzyme displays a DNA polymerase activity that can copy either DNA or RNA templates, and a ribonuclease H (RNase H) activity that cleaves the RNA strand of RNA-DNA heteroduplexes in a partially processive 3' to 5' endonucleasic mode. Conversion of viral genomic RNA into dsDNA requires many steps. A tRNA binds to the primer-binding site (PBS) situated at the 5'-end of the viral RNA. RT uses the 3' end of the tRNA primer to perform a short round of RNA-dependent minus-strand DNA synthesis. The reading proceeds through the U5 region and ends after the repeated (R) region which is present at both ends of viral RNA. The portion of the RNA-DNA heteroduplex is digested by the RNase H, resulting in a ssDNA product attached to the tRNA primer. This ssDNA/tRNA hybridizes with the identical R region situated at the 3' end of viral RNA. This template exchange, known as minus-strand DNA strong stop transfer, can be either intra- or intermolecular. RT uses the 3' end of this newly synthesized short ssDNA to perform the RNA-dependent minus-strand DNA synthesis of the whole template. RNase H digests the RNA template except for two polypurine tracts (PPTs) situated at the 5'-end and near the center of the genome. It is not clear if both polymerase and RNase H activities are simultaneous. RNase H can probably proceed both in a polymerase-dependent (RNA cut into small fragments by the same RT performing DNA synthesis) and a polymerase-independent mode (cleavage of remaining RNA fragments by free RTs). Secondly, RT performs DNA-directed plus-strand DNA synthesis using the PPTs that have not been removed by RNase H as primers. PPTs and tRNA primers are then removed by RNase H. The 3' and 5' ssDNA PBS regions hybridize to form a circular dsDNA intermediate. Strand displacement synthesis by RT to the PBS and PPT ends produces a blunt ended, linear dsDNA copy of the viral genome that includes long terminal repeats (LTRs) at both ends. Functionally, integrase catalyzes viral DNA integration into the host chromosome, by performing a series of DNA cutting and joining reactions. This enzyme activity takes place after virion entry into a cell and reverse transcription of the RNA genome in dsDNA. The first step in the integration process is 3' processing. This step requires a complex comprising the viral genome, matrix protein, Vpr and integrase. This complex is called the pre-integration complex (PIC). The integrase protein removes 2 nucleotides from each 3' end of the viral DNA, leaving recessed CA OH's at the 3' ends. In the second step, the PIC enters cell nucleus. This process is mediated through integrase and Vpr proteins, and allows the virus to infect a non dividing cell. This ability to enter the nucleus is specific of lentiviruses, other retroviruses cannot and rely on cell division to access cell chromosomes. In the third step, termed strand transfer, the integrase protein joins the previously processed 3' ends to the 5' ends of strands of target cellular DNA at the site of integration. The 5'-ends are produced by integrase-catalyzed staggered cuts, 5 bp apart. A Y-shaped, gapped, recombination intermediate results, with the 5'-ends of the viral DNA strands and the 3' ends of target DNA strands remaining unjoined, flanking a gap of 5 bp. The last step is viral DNA integration into host chromosome. This involves host DNA repair synthesis in which the 5 bp gaps between the unjoined strands are filled in and then ligated. Since this process occurs at both cuts flanking the SIV genome, a 5 bp duplication of host DNA is produced at the ends of SIV integration. Alternatively, Integrase may catalyze the excision of viral DNA just after strand transfer, this is termed disintegration. In Simian immunodeficiency virus agm.grivet (isolate AGM gr-1) (SIV-agm.gri), this protein is Gag-Pol polyprotein (gag-pol).